A 161-amino-acid polypeptide reads, in one-letter code: N5-carboxyaminoimidazole ribonucleotide mutase (161 aa).

Substrate is bound by residues Ser-9, Asp-12, and Arg-39.

Belongs to the AIR carboxylase family. Class I subfamily.

The enzyme catalyses 5-carboxyamino-1-(5-phospho-D-ribosyl)imidazole + H(+) = 5-amino-1-(5-phospho-D-ribosyl)imidazole-4-carboxylate. The protein operates within purine metabolism; IMP biosynthesis via de novo pathway; 5-amino-1-(5-phospho-D-ribosyl)imidazole-4-carboxylate from 5-amino-1-(5-phospho-D-ribosyl)imidazole (N5-CAIR route): step 2/2. Its function is as follows. Catalyzes the conversion of N5-carboxyaminoimidazole ribonucleotide (N5-CAIR) to 4-carboxy-5-aminoimidazole ribonucleotide (CAIR). The protein is N5-carboxyaminoimidazole ribonucleotide mutase of Vibrio parahaemolyticus serotype O3:K6 (strain RIMD 2210633).